The primary structure comprises 690 residues: Eukaryotic translation initiation factor 3 subunit B (690 aa).

Positions 1–11 (MAKKKSEEHSG) are enriched in basic and acidic residues. A disordered region spans residues 1 to 36 (MAKKKSEEHSGADANDSDYTEEPNFDDPPNFVDNIS). Residues 15–25 (NDSDYTEEPNF) show a composition bias toward acidic residues. An RRM domain is found at 57 to 141 (SVVVVDNMPK…YTFAVNLFTD (85 aa)). WD repeat units lie at residues 207–246 (TRER…KIQK), 292–331 (GDGM…LLDL), 334–369 (IKIP…TLME), 442–484 (EIRE…KPSL), and 530–575 (PDHF…IRRT). The stretch at 614 to 645 (QKDRLRLTRASKELLEKRSQLRETFMEYRNKR) forms a coiled coil.

It belongs to the eIF-3 subunit B family. In terms of assembly, component of the eukaryotic translation initiation factor 3 (eIF-3) complex. The eIF-3 complex interacts with pix. Interacts with mxt.

Its subcellular location is the cytoplasm. In terms of biological role, RNA-binding component of the eukaryotic translation initiation factor 3 (eIF-3) complex, which is involved in protein synthesis of a specialized repertoire of mRNAs and, together with other initiation factors, stimulates binding of mRNA and methionyl-tRNAi to the 40S ribosome. The eIF-3 complex specifically targets and initiates translation of a subset of mRNAs involved in cell proliferation. This chain is Eukaryotic translation initiation factor 3 subunit B, found in Drosophila virilis (Fruit fly).